Here is a 192-residue protein sequence, read N- to C-terminus: Glutaredoxin-C9 (192 aa).

The 103-residue stretch at 89 to 191 (YERVARMASG…PLLKQAGALW (103 aa)) folds into the Glutaredoxin domain. Residues Cys-109 and Cys-112 are joined by a disulfide bond. The Responsive for interaction with TGA factors motif lies at 189–192 (ALWL).

This sequence belongs to the glutaredoxin family. CC-type subfamily.

The protein localises to the cytoplasm. It localises to the nucleus. Functionally, has a glutathione-disulfide oxidoreductase activity in the presence of NADPH and glutathione reductase. Reduces low molecular weight disulfides and proteins. In Oryza sativa subsp. japonica (Rice), this protein is Glutaredoxin-C9 (GRXC9).